The chain runs to 170 residues: Peroxidase 2 (170 aa).

Asn-9 carries N-linked (GlcNAc...) asparagine glycosylation. His-24 lines the heme b pocket. Position 25 (Thr-25) interacts with Ca(2+). Cys-31 and Cys-59 are oxidised to a cystine. Asp-73, Thr-76, and Asp-81 together coordinate Ca(2+).

It belongs to the peroxidase family. Classical plant (class III) peroxidase subfamily. Requires Ca(2+) as cofactor. It depends on heme b as a cofactor.

The enzyme catalyses 2 a phenolic donor + H2O2 = 2 a phenolic radical donor + 2 H2O. Functionally, removal of H(2)O(2), oxidation of toxic reductants, biosynthesis and degradation of lignin, suberization, auxin catabolism, response to environmental stresses such as wounding, pathogen attack and oxidative stress. These functions might be dependent on each isozyme/isoform in each plant tissue. Involved in defense response to powdery meldew fungus. The polypeptide is Peroxidase 2 (Hordeum vulgare (Barley)).